The chain runs to 670 residues: ATP synthase subunit alpha 2 (670 aa).

Position 180-187 (180-187) interacts with ATP; it reads GDRATGKT. The segment at 525-670 is disordered; sequence MPAEDAAGDI…DAEAEARHKR (146 aa). A compositionally biased stretch (basic and acidic residues) spans 543 to 588; sequence ARGDADRDADHGANREVSREVSPEASREVSREVSREVSHEADRDAA. Positions 589–599 are enriched in low complexity; it reads ADAARVAGRAP. Positions 621–639 are enriched in basic and acidic residues; it reads ADGDRASASRPPPDARGDA. The segment covering 650–661 has biased composition (low complexity); sequence ADANVNADANVD.

Belongs to the ATPase alpha/beta chains family. As to quaternary structure, F-type ATPases have 2 components, CF(1) - the catalytic core - and CF(0) - the membrane proton channel. CF(1) has five subunits: alpha(3), beta(3), gamma(1), delta(1), epsilon(1). CF(0) has three main subunits: a(1), b(2) and c(9-12). The alpha and beta chains form an alternating ring which encloses part of the gamma chain. CF(1) is attached to CF(0) by a central stalk formed by the gamma and epsilon chains, while a peripheral stalk is formed by the delta and b chains.

The protein resides in the cell inner membrane. It catalyses the reaction ATP + H2O + 4 H(+)(in) = ADP + phosphate + 5 H(+)(out). Functionally, produces ATP from ADP in the presence of a proton gradient across the membrane. The alpha chain is a regulatory subunit. The protein is ATP synthase subunit alpha 2 of Burkholderia mallei (strain NCTC 10247).